Here is a 237-residue protein sequence, read N- to C-terminus: MQFAAPLVPGRLVQRYKRFLADIDTDDGRVTVHCPNPGAMLGLNAPGARVLLSRSSNPARKLPLTWELVEAELPGGAQWVGINTQRPNALVAEAFRAGAIAALAGHDALRPEVRYAEASRVDFLASGAEAGPCHVEVKNCHLMRRAGLAEFPDCKAARSARHMRDLAQVVADGGRALVVIVVQMRAEAFDVARDIDPAFDRAFREARAAGVAVRAYRCAVGPEGVAIAEEIPVITPP.

The protein belongs to the SfsA family.

The protein is Sugar fermentation stimulation protein homolog of Methylobacterium radiotolerans (strain ATCC 27329 / DSM 1819 / JCM 2831 / NBRC 15690 / NCIMB 10815 / 0-1).